Consider the following 424-residue polypeptide: Omega-6 fatty acid desaturase, chloroplastic (424 aa).

The N-terminal 63 residues, 1–63 (MACTLADSLL…TRNKVTVIHA (63 aa)), are a transit peptide targeting the chloroplast. Position 64 is an N-acetylvaline (Val-64). Residues 165–169 (HDCAH) carry the Histidine box-1 motif. Positions 201–205 (HDRHH) match the Histidine box-2 motif. The Histidine box-3 signature appears at 361–365 (HIPHH).

This sequence belongs to the fatty acid desaturase type 1 family.

The protein resides in the plastid. The protein localises to the chloroplast membrane. The catalysed reaction is a (9Z)-octadecenoyl-containing glycerolipid + 2 reduced [2Fe-2S]-[ferredoxin] + O2 + 2 H(+) = a (9Z,12Z)-octadecadienoyl-containing glycerolipid + 2 oxidized [2Fe-2S]-[ferredoxin] + 2 H2O. Its pathway is lipid metabolism; polyunsaturated fatty acid biosynthesis. Chloroplast omega-6 fatty acid desaturase introduces the second double bond in the biosynthesis of 16:3 and 18:3 fatty acids, important constituents of plant membranes. It is thought to use ferredoxin as an electron donor and to act on fatty acids esterified to galactolipids, sulfolipids and phosphatidylglycerol. The chain is Omega-6 fatty acid desaturase, chloroplastic from Glycine max (Soybean).